Here is a 686-residue protein sequence, read N- to C-terminus: Amyloid-beta-like protein (686 aa).

The N-terminal stretch at 1–21 (MTVGKLMIGLLIPILVATVYA) is a signal peptide. Topologically, residues 22-621 (EGSPAGSKRH…VERSASSVFQ (600 aa)) are extracellular. A GFLD subdomain region spans residues 32–125 (EKFIPMVAFS…PYHCIDGEFH (94 aa)). Residues 32–197 (EKFIPMVAFS…TGVEFVCCPN (166 aa)) form the E1 domain. 6 disulfide bridges follow: C42/C65, C76/C119, C101/C108, C135/C195, C146/C182, and C160/C194. An N-linked (GlcNAc...) asparagine glycan is attached at N84. Positions 133 to 197 (HDCQFSHVNS…TGVEFVCCPN (65 aa)) are cuBD subdomain. N201 is a glycosylation site (N-linked (GlcNAc...) asparagine). The segment at 201 to 245 (NKTDVQKTKEDEDDDDDEDDAYEDDYSEESDEKDEEEPSSQDPYF) is disordered. Residues 211–239 (DEDDDDDEDDAYEDDYSEESDEKDEEEPS) show a composition bias toward acidic residues. Residues 240–440 (SQDPYFKIAN…KYVRPIAVTY (201 aa)) enclose the E2 domain. N249 carries an N-linked (GlcNAc...) asparagine glycan. Heparin-binding positions include 252 to 255 (NEHD) and H382. N-linked (GlcNAc...) asparagine glycosylation occurs at N417. Disordered regions lie at residues 479-526 (PTTT…DMKK) and 550-585 (KLVE…NIKE). A compositionally biased stretch (acidic residues) spans 500–516 (SDSEEEADEYYEDEDDE). The segment covering 517-526 (QVKKTPDMKK) has biased composition (basic and acidic residues). Residues 558–567 (TDDEDDDEDS) are compositionally biased toward acidic residues. Residues 622 to 642 (PYVLASAMFITAICIIAFAIT) traverse the membrane as a helical segment. Topologically, residues 643–686 (NARRRRAMRGFIEVDVYTPEERHVAGMQVNGYENPTYSFFDSKA) are cytoplasmic. The short motif at 674 to 679 (YENPTY) is the YENPXY motif element.

Belongs to the APP family. Interacts (via cytoplasmic domain) with feh-1 (via PID 2 domain). In terms of processing, extracellular region is proteolytically cleaved. As to expression, expressed in the head, pharynx, spermatheca, uterus, vulva, tail and ventral neurons. Specifically expressed in nerve ring interneurons, the ventral cord, socket and amphids in the head, with strong expression in junctional cells, including the pharyngeal intestinal valve and uterine seam junction, and the excretory cell and weak expression in epidermal epithelial cells, including hyp7 cells, vulval cells, rectal valve cells, pharyngeal arcade cells and the tail hypodermis.

The protein localises to the membrane. Its subcellular location is the early endosome. Functionally, required for normal developmental progression throughout all life stages. Specifically required for the molt stage during all larval transitions and morphogenesis. Acts with heterochronic genes, including members of the let-7 family, to regulate larval stage to adult transition. Acts synergistically with acn-1 in let-7 regulated postembryonic cell division of hypodermal seam cells. Acts in multiple pathways to influence daf-12 and daf-16 activity to in turn regulate physiological and reproductive processes such as body size and egg-laying. May play a role in neurotransmission. The sequence is that of Amyloid-beta-like protein from Caenorhabditis elegans.